The following is a 666-amino-acid chain: DNA mismatch repair protein MutL (666 aa).

It belongs to the DNA mismatch repair MutL/HexB family.

Its function is as follows. This protein is involved in the repair of mismatches in DNA. It is required for dam-dependent methyl-directed DNA mismatch repair. May act as a 'molecular matchmaker', a protein that promotes the formation of a stable complex between two or more DNA-binding proteins in an ATP-dependent manner without itself being part of a final effector complex. In Clostridium botulinum (strain Okra / Type B1), this protein is DNA mismatch repair protein MutL.